A 321-amino-acid polypeptide reads, in one-letter code: Ribonuclease Z (321 aa).

Residues His-62, His-64, Asp-66, His-67, His-139, Asp-210, and His-268 each contribute to the Zn(2+) site. Residue Asp-66 is the Proton acceptor of the active site.

The protein belongs to the RNase Z family. In terms of assembly, homodimer. The cofactor is Zn(2+).

The catalysed reaction is Endonucleolytic cleavage of RNA, removing extra 3' nucleotides from tRNA precursor, generating 3' termini of tRNAs. A 3'-hydroxy group is left at the tRNA terminus and a 5'-phosphoryl group is left at the trailer molecule.. In terms of biological role, zinc phosphodiesterase, which displays some tRNA 3'-processing endonuclease activity. Probably involved in tRNA maturation, by removing a 3'-trailer from precursor tRNA. In Trichodesmium erythraeum (strain IMS101), this protein is Ribonuclease Z.